The sequence spans 446 residues: Methylenetetrahydrofolate--tRNA-(uracil-5-)-methyltransferase TrmFO (446 aa).

8 to 13 (GAGLAG) provides a ligand contact to FAD.

This sequence belongs to the MnmG family. TrmFO subfamily. It depends on FAD as a cofactor.

It is found in the cytoplasm. The catalysed reaction is uridine(54) in tRNA + (6R)-5,10-methylene-5,6,7,8-tetrahydrofolate + NADH + H(+) = 5-methyluridine(54) in tRNA + (6S)-5,6,7,8-tetrahydrofolate + NAD(+). It carries out the reaction uridine(54) in tRNA + (6R)-5,10-methylene-5,6,7,8-tetrahydrofolate + NADPH + H(+) = 5-methyluridine(54) in tRNA + (6S)-5,6,7,8-tetrahydrofolate + NADP(+). Catalyzes the folate-dependent formation of 5-methyl-uridine at position 54 (M-5-U54) in all tRNAs. This chain is Methylenetetrahydrofolate--tRNA-(uracil-5-)-methyltransferase TrmFO, found in Paracoccus denitrificans (strain Pd 1222).